We begin with the raw amino-acid sequence, 155 residues long: Ribosome maturation factor RimP (155 aa).

This sequence belongs to the RimP family.

The protein resides in the cytoplasm. Functionally, required for maturation of 30S ribosomal subunits. The chain is Ribosome maturation factor RimP from Salinibacter ruber (strain DSM 13855 / M31).